Here is a 103-residue protein sequence, read N- to C-terminus: Insulin (103 aa).

The signal sequence occupies residues 1–20 (IQSLPLLALLALSGPGTSHA). Cystine bridges form between Cys-27–Cys-89, Cys-39–Cys-102, and Cys-88–Cys-93. A propeptide spans 53–80 (DAEHPLVNGPLHGEVGDLPFQQEEFEKV) (c peptide).

The protein belongs to the insulin family. As to quaternary structure, heterodimer of a B chain and an A chain linked by two disulfide bonds.

The protein localises to the secreted. Insulin decreases blood glucose concentration. It increases cell permeability to monosaccharides, amino acids and fatty acids. It accelerates glycolysis, the pentose phosphate cycle, and glycogen synthesis in liver. In Selasphorus rufus (Rufous hummingbird), this protein is Insulin (INS).